Consider the following 215-residue polypeptide: NAD(P)H-quinone oxidoreductase subunit I (215 aa).

4Fe-4S ferredoxin-type domains follow at residues 55–84 (GRIH…VDWV) and 95–124 (RNYS…MTEE). Residues Cys-64, Cys-67, Cys-70, Cys-74, Cys-104, Cys-107, Cys-110, and Cys-114 each coordinate [4Fe-4S] cluster. Positions 169–180 (MDPHGVASDRPR) are enriched in basic and acidic residues. The interval 169–215 (MDPHGVASDRPRAGQLPAQVLETLTPPAKPTAKNDGQSSSEAKEGDA) is disordered.

The protein belongs to the complex I 23 kDa subunit family. NDH-1 is composed of at least 11 different subunits. The cofactor is [4Fe-4S] cluster.

It is found in the cellular thylakoid membrane. It catalyses the reaction a plastoquinone + NADH + (n+1) H(+)(in) = a plastoquinol + NAD(+) + n H(+)(out). The catalysed reaction is a plastoquinone + NADPH + (n+1) H(+)(in) = a plastoquinol + NADP(+) + n H(+)(out). Its function is as follows. NDH-1 shuttles electrons from an unknown electron donor, via FMN and iron-sulfur (Fe-S) centers, to quinones in the respiratory and/or the photosynthetic chain. The immediate electron acceptor for the enzyme in this species is believed to be plastoquinone. Couples the redox reaction to proton translocation, and thus conserves the redox energy in a proton gradient. This Synechococcus sp. (strain CC9605) protein is NAD(P)H-quinone oxidoreductase subunit I.